Reading from the N-terminus, the 181-residue chain is Bifunctional protein PyrR (181 aa).

The PRPP-binding motif lies at 100–112 (VVLVDDVIYTGRT).

It belongs to the purine/pyrimidine phosphoribosyltransferase family. PyrR subfamily. Homodimer and homohexamer; in equilibrium.

It carries out the reaction UMP + diphosphate = 5-phospho-alpha-D-ribose 1-diphosphate + uracil. Functionally, regulates transcriptional attenuation of the pyrimidine nucleotide (pyr) operon by binding in a uridine-dependent manner to specific sites on pyr mRNA. This disrupts an antiterminator hairpin in the RNA and favors formation of a downstream transcription terminator, leading to a reduced expression of downstream genes. Its function is as follows. Also displays a weak uracil phosphoribosyltransferase activity which is not physiologically significant. The polypeptide is Bifunctional protein PyrR (Pelotomaculum thermopropionicum (strain DSM 13744 / JCM 10971 / SI)).